Here is a 203-residue protein sequence, read N- to C-terminus: Guanylate kinase (203 aa).

One can recognise a Guanylate kinase-like domain in the interval 3–181 (GTLYVVSAPS…TLADLQAIFT (179 aa)). 10-17 (APSGAGKT) lines the ATP pocket.

Belongs to the guanylate kinase family.

It is found in the cytoplasm. It catalyses the reaction GMP + ATP = GDP + ADP. In terms of biological role, essential for recycling GMP and indirectly, cGMP. The sequence is that of Guanylate kinase from Alkalilimnicola ehrlichii (strain ATCC BAA-1101 / DSM 17681 / MLHE-1).